Here is a 786-residue protein sequence, read N- to C-terminus: E3 ubiquitin-protein ligase pub3 (786 aa).

One can recognise a C2 domain in the interval 1-109; sequence MEQGAKRVRF…RSNREVSLTR (109 aa). Disordered stretches follow at residues 134 to 225 and 263 to 306; these read IRAP…NSNA and TWTR…DSGN. Over residues 142-193 the composition is skewed to low complexity; sequence SSTTANRTTSTPTTTTARTTRTTPRPTATTNTSNQSTSNSTRNGTSAATSNG. Residues 204–213 are compositionally biased toward polar residues; it reads HRSSPVTNRQ. Low complexity predominate over residues 214–225; the sequence is TNNTSALSNSNA. Residues 236 to 269 enclose the WW 1 domain; it reads GRLPPGWERRADSLGRTYYVDHNTRTTTWTRPAS. Polar residues-rich tracts occupy residues 263–285 and 295–305; these read TWTR…QRLN and SNPSLMQSDSG. 2 WW domains span residues 306-339 and 364-397; these read NDLP…DPRN and GPLP…DPRL. The HECT domain occupies 453–786; that stretch reads SAHDLKKRLM…VENTVGFGNE (334 aa). Cys754 (glycyl thioester intermediate) is an active-site residue.

The enzyme catalyses S-ubiquitinyl-[E2 ubiquitin-conjugating enzyme]-L-cysteine + [acceptor protein]-L-lysine = [E2 ubiquitin-conjugating enzyme]-L-cysteine + N(6)-ubiquitinyl-[acceptor protein]-L-lysine.. It functions in the pathway protein modification; protein ubiquitination. Its function is as follows. E3 ubiquitin-protein ligase which accepts ubiquitin from an E2 ubiquitin-conjugating enzyme in the form of a thioester and then directly transfers the ubiquitin to targeted substrates. In Schizosaccharomyces pombe (strain 972 / ATCC 24843) (Fission yeast), this protein is E3 ubiquitin-protein ligase pub3 (pub3).